Reading from the N-terminus, the 365-residue chain is MGSLASERKVVGWAARDATGHLAPYTYTLRSTGPEDVVVKVLYCGICHTDIHQAKNHLGASKYPMVPGHEVVGEVVEVGPEVTKYGVGDVVGVGVIVGCCRECKPCKANVEQYCNKKIWSYNDVYTDGRPTQGGFASTMVVDQKFVMKIPAGLAPEQAAPLLCAGVTVYSPLKAFGLTTPGLRGAILGLGGVGHMGVKVAKAMGHHVTVISSSSKKRAEAMDHLGADAYLVSSDAAAMAAAADSLDYIIDTVPVHHPLEPYLALLKLDGKHVLLGVIGEPLSFVSPMVMLGRKAITGSFIGSIDETAEVLQFCVDKGLTSQIEVVKMGYVNEALDRLERNDVRYRFVVDVAGSNVEEVAADAPSN.

Cys-47 provides a ligand contact to Zn(2+). Thr-49 contributes to the NADP(+) binding site. The Zn(2+) site is built by His-69, Glu-70, Cys-100, Cys-103, Cys-106, Cys-114, and Cys-163. NADP(+)-binding positions include Thr-167, 188-193 (GLGGVG), 211-216 (SSSSKK), Thr-251, Gly-275, and 298-300 (SFI).

This sequence belongs to the zinc-containing alcohol dehydrogenase family. As to quaternary structure, homodimer. The cofactor is Zn(2+).

It carries out the reaction (E)-cinnamyl alcohol + NADP(+) = (E)-cinnamaldehyde + NADPH + H(+). It catalyses the reaction (E)-coniferol + NADP(+) = (E)-coniferaldehyde + NADPH + H(+). The enzyme catalyses (E)-sinapyl alcohol + NADP(+) = (E)-sinapaldehyde + NADPH + H(+). The catalysed reaction is (E)-4-coumaroyl alcohol + NADP(+) = (E)-4-coumaraldehyde + NADPH + H(+). It carries out the reaction (E)-caffeyl alcohol + NADP(+) = (E)-caffeyl aldehyde + NADPH + H(+). It participates in aromatic compound metabolism; phenylpropanoid biosynthesis. Its function is as follows. Involved in lignin biosynthesis. Catalyzes the final step specific for the production of lignin monomers. Catalyzes the NADPH-dependent reduction of coniferaldehyde, 5-hydroxyconiferaldehyde, sinapaldehyde, 4-coumaraldehyde and caffeyl aldehyde to their respective alcohols. In Saccharum officinarum (Sugarcane), this protein is Probable cinnamyl alcohol dehydrogenase (CAD).